Consider the following 99-residue polypeptide: Putative GIY-YIG domain-containing protein 242L (99 aa).

The region spanning 5–81 (NGWNIYMVTM…KKQTKKVKLQ (77 aa)) is the GIY-YIG domain.

The chain is Putative GIY-YIG domain-containing protein 242L from Invertebrate iridescent virus 6 (IIV-6).